A 529-amino-acid polypeptide reads, in one-letter code: MHSVLAQAASGALSFELRLGQSSVLTICILALLTFVLREIVLYFTRHSMPPGPFRWPLIGNALQLPQDHPWVKYTEWAKMYGPLMQLDVLGQHMLVITSAQTARDLMEKRSSIYSDRPHLVMAGDLAGFGDTLILQNYGEEFRYQRKLVSHSFSPSVIHRYYDLQEAAARRLVLAIIEDPDSLENSTRLHIASIILRMTYGYTVKGVDDPLFTTGIAVINGFSEATRPGAWPVDFVPILQYVPHWVPGFVFTRKAREWRGVLERAMWAPYHWCKENYARDAAHGLCLCGSILAAEGSQLSSDQEWLFVNAAVTVMGGGLDTNISTILSFVLAMLRFPEVQKKAQAEIDAVIGPNRLPLISDRHSLPYVRSVVTEVYRWIPAVPLGIPHALRQDDHYDGLFLSKGSVVVPNVWGMLHDPSIYPAPHEFKPERYGGLDAEMTKVTDIAFGFGRRACPGFYFAEGTIFAIVATVLAICDVVPTVDEHGQEVIPEVSLTSGAIVSPENVKCAFRPRSGRVKDILVEAVETEQE.

Residues 24 to 44 (VLTICILALLTFVLREIVLYF) traverse the membrane as a helical segment. 2 N-linked (GlcNAc...) asparagine glycosylation sites follow: Asn185 and Asn322. Cys454 contributes to the heme binding site.

The protein belongs to the cytochrome P450 family. Heme is required as a cofactor.

It is found in the membrane. The protein operates within secondary metabolite biosynthesis. In terms of biological role, cytochrome P450 monooxygenase that is able to use trans-stilbene as a substrate for oxidation. The polypeptide is Cytochrome P450 monooxygenase 45 (Postia placenta (strain ATCC 44394 / Madison 698-R) (Brown rot fungus)).